A 1127-amino-acid chain; its full sequence is Cellulose synthase-like protein D1 (1127 aa).

Positions 1-24 are disordered; that stretch reads MASKGILKNGGKPPTAPSSAAPTV. 2 helical membrane passes run 262–282 and 292–312; these read VISP…LFLM and AIWL…SWVL. Active-site residues include Asp392 and Asp828. The next 6 helical transmembrane spans lie at 910–930, 936–956, 982–1002, 1025–1045, 1059–1079, and 1089–1109; these read VFLI…QFIV, TFLT…MLEI, LAAV…SFTL, SLMI…AVGF, LLGG…FAKG, and TIVY…WIAI.

It belongs to the glycosyltransferase 2 family. Plant cellulose synthase-like D subfamily.

The protein resides in the golgi apparatus membrane. Thought to be a Golgi-localized beta-glycan synthase that polymerize the backbones of noncellulosic polysaccharides (hemicelluloses) of plant cell wall. The protein is Cellulose synthase-like protein D1 (CSLD1) of Oryza sativa subsp. indica (Rice).